The chain runs to 139 residues: Holo-[acyl-carrier-protein] synthase (139 aa).

Residues D8 and E57 each coordinate Mg(2+).

It belongs to the P-Pant transferase superfamily. AcpS family. The cofactor is Mg(2+).

The protein localises to the cytoplasm. It carries out the reaction apo-[ACP] + CoA = holo-[ACP] + adenosine 3',5'-bisphosphate + H(+). In terms of biological role, transfers the 4'-phosphopantetheine moiety from coenzyme A to a Ser of acyl-carrier-protein. This is Holo-[acyl-carrier-protein] synthase from Sinorhizobium fredii (strain NBRC 101917 / NGR234).